The sequence spans 255 residues: tRNA (guanine-N(7)-)-methyltransferase (255 aa).

The disordered stretch occupies residues 1–31 (MMHDDPNEAGLPPHNDAIPDETAEGADEVNP). Acidic residues predominate over residues 18 to 27 (IPDETAEGAD). Residues Glu86, Glu111, Asp138, and Asp161 each contribute to the S-adenosyl-L-methionine site. Residue Asp161 is part of the active site. Substrate-binding positions include Lys165, Asp197, and 232 to 235 (TKFE).

Belongs to the class I-like SAM-binding methyltransferase superfamily. TrmB family.

The catalysed reaction is guanosine(46) in tRNA + S-adenosyl-L-methionine = N(7)-methylguanosine(46) in tRNA + S-adenosyl-L-homocysteine. The protein operates within tRNA modification; N(7)-methylguanine-tRNA biosynthesis. Catalyzes the formation of N(7)-methylguanine at position 46 (m7G46) in tRNA. In Burkholderia cenocepacia (strain HI2424), this protein is tRNA (guanine-N(7)-)-methyltransferase.